The primary structure comprises 515 residues: G-protein coupled receptor 176 (515 aa).

Topologically, residues 1–41 (MGHNSSWVSPNTSHPRNTSGAEAGANLSAFGELSEAQLYRQ) are extracellular. Asn4, Asn11, Asn17, and Asn26 each carry an N-linked (GlcNAc...) asparagine glycan. Residues 42–64 (FTTTVQVVIFIGSLLGNFMVLWS) traverse the membrane as a helical segment. Residues 65–77 (TCRTTVFKSVTNR) lie on the Cytoplasmic side of the membrane. A helical transmembrane segment spans residues 78 to 98 (FIKNLACSGICASVVCVPFDI). Residues 99–108 (ILSSSPHCCW) are Extracellular-facing. A helical transmembrane segment spans residues 109–129 (WIYTMLFCKVLKFLHKVFCSV). The Cytoplasmic portion of the chain corresponds to 130-157 (TVLSFPAIALDRYYSVLYPLERKISDAK). Residues 158–177 (SRELVMYIWAHAVVASVPVF) form a helical membrane-spanning segment. At 178 to 204 (AVTNVADIYAMSTCTEVWSNSLGHLVY) the chain is on the extracellular side. A helical membrane pass occupies residues 205-225 (VLIYNVTTVIVPVAVVFLFLI). Residues 226-264 (LIRRALSASQKKKVIIAALRTPQNTISIPYASQREAELH) are Cytoplasmic-facing. Residues 265–285 (ATLLSMVTVFILCSVPYATLV) form a helical membrane-spanning segment. Over 286–301 (VYQTVLNVPNTSVFLL) the chain is Extracellular. The helical transmembrane segment at 302–322 (LTAIWLPKVSLLANPVLFLTV) threads the bilayer. At 323-515 (NKSVRKCLVG…KVSIFPKVDS (193 aa)) the chain is on the cytoplasmic side. Positions 407-435 (SCPEGEQEPPQLAPSVPPPGTVDSEPRVS) are disordered. Residues 417–426 (QLAPSVPPPG) show a composition bias toward pro residues.

The protein belongs to the G-protein coupled receptor 1 family. Expressed mainly in the brain, with prominent expression in the SCN (at protein level).

The protein resides in the cell membrane. In terms of biological role, orphan receptor involved in normal circadian rhythm behavior. Acts through the G-protein subclass G(z)-alpha and has an agonist-independent basal activity to repress cAMP production. In Mus musculus (Mouse), this protein is G-protein coupled receptor 176 (Gpr176).